The sequence spans 291 residues: N-acetylmannosamine kinase (291 aa).

Residues 5-12 and 132-139 each bind ATP; these read AIDIGGTK and GVGGGVVS. Zn(2+) contacts are provided by His-156, Cys-166, Cys-168, and Cys-173.

The protein belongs to the ROK (NagC/XylR) family. NanK subfamily. Homodimer.

It carries out the reaction an N-acyl-D-mannosamine + ATP = an N-acyl-D-mannosamine 6-phosphate + ADP + H(+). The protein operates within amino-sugar metabolism; N-acetylneuraminate degradation; D-fructose 6-phosphate from N-acetylneuraminate: step 2/5. Catalyzes the phosphorylation of N-acetylmannosamine (ManNAc) to ManNAc-6-P. The protein is N-acetylmannosamine kinase of Escherichia coli (strain 55989 / EAEC).